The following is a 249-amino-acid chain: uncharacterized protein (249 aa).

His-10, His-12, Glu-95, His-129, His-150, and Asp-198 together coordinate a divalent metal cation.

The protein belongs to the metallo-dependent hydrolases superfamily. TatD-type hydrolase family. It depends on a divalent metal cation as a cofactor.

This is an uncharacterized protein from Methanocaldococcus jannaschii (strain ATCC 43067 / DSM 2661 / JAL-1 / JCM 10045 / NBRC 100440) (Methanococcus jannaschii).